A 476-amino-acid chain; its full sequence is Rho GTPase-activating protein 68F (476 aa).

2 disordered regions span residues 1–35 (MDAHSRFAPRLPGPAINPIVDNSDEPQPSLSDLHD) and 241–266 (DKLNPSRKPSTPPPSSNINASRQQQH). Phosphoserine occurs at positions 29 and 31. The CRAL-TRIO domain occupies 91-244 (SENFQTPRNK…NICDLDDKLN (154 aa)). Residue threonine 251 is modified to Phosphothreonine. A compositionally biased stretch (polar residues) spans 257–266 (NINASRQQQH). A Rho-GAP domain is found at 276–464 (VPLKFIVMNS…FVLQNHKDIY (189 aa)).

Its function is as follows. Functions as a GTPase-activating protein (GAP) for RhoA/Rho1 during gastrulation by converting it to an inactive GDP-bound state. The sequence is that of Rho GTPase-activating protein 68F (RhoGAP68F) from Drosophila melanogaster (Fruit fly).